Consider the following 432-residue polypeptide: Glutamyl-tRNA reductase (432 aa).

Substrate is bound by residues 49 to 52 (TCNR), serine 109, 114 to 116 (EGQ), and glutamine 120. Cysteine 50 acts as the Nucleophile in catalysis. 198-203 (GAGRMS) is a binding site for NADP(+).

This sequence belongs to the glutamyl-tRNA reductase family. In terms of assembly, homodimer.

It catalyses the reaction (S)-4-amino-5-oxopentanoate + tRNA(Glu) + NADP(+) = L-glutamyl-tRNA(Glu) + NADPH + H(+). It functions in the pathway porphyrin-containing compound metabolism; protoporphyrin-IX biosynthesis; 5-aminolevulinate from L-glutamyl-tRNA(Glu): step 1/2. The protein operates within porphyrin-containing compound metabolism; chlorophyll biosynthesis. Functionally, catalyzes the NADPH-dependent reduction of glutamyl-tRNA(Glu) to glutamate 1-semialdehyde (GSA). This Synechococcus sp. (strain CC9605) protein is Glutamyl-tRNA reductase.